Here is a 246-residue protein sequence, read N- to C-terminus: Mast cell protease 9 (246 aa).

The signal sequence occupies residues 1-18 (MQALLFLMALLLPSRAGA). Residues 19-20 (EE) constitute a propeptide, activation peptide. One can recognise a Peptidase S1 domain in the interval 21 to 244 (IIGGVESEPH…HVPWINRVIK (224 aa)). An intrachain disulfide couples Cys-50 to Cys-66. Active-site charge relay system residues include His-65 and Asp-109. Cystine bridges form between Cys-143/Cys-208 and Cys-174/Cys-187. Catalysis depends on Ser-202, which acts as the Charge relay system.

The protein belongs to the peptidase S1 family. Granzyme subfamily. As to expression, selectively expressed in uterine mast cells.

The chain is Mast cell protease 9 (Mcpt9) from Mus musculus (Mouse).